A 323-amino-acid chain; its full sequence is Aspartate carbamoyltransferase catalytic subunit (323 aa).

Carbamoyl phosphate-binding residues include arginine 68 and threonine 69. An L-aspartate-binding site is contributed by lysine 96. Carbamoyl phosphate contacts are provided by arginine 118, histidine 148, and glutamine 151. The L-aspartate site is built by arginine 181 and arginine 236. Carbamoyl phosphate-binding residues include glycine 277 and proline 278.

Belongs to the aspartate/ornithine carbamoyltransferase superfamily. ATCase family. As to quaternary structure, heterododecamer (2C3:3R2) of six catalytic PyrB chains organized as two trimers (C3), and six regulatory PyrI chains organized as three dimers (R2).

The catalysed reaction is carbamoyl phosphate + L-aspartate = N-carbamoyl-L-aspartate + phosphate + H(+). Its pathway is pyrimidine metabolism; UMP biosynthesis via de novo pathway; (S)-dihydroorotate from bicarbonate: step 2/3. Functionally, catalyzes the condensation of carbamoyl phosphate and aspartate to form carbamoyl aspartate and inorganic phosphate, the committed step in the de novo pyrimidine nucleotide biosynthesis pathway. This is Aspartate carbamoyltransferase catalytic subunit from Verminephrobacter eiseniae (strain EF01-2).